An 85-amino-acid chain; its full sequence is HssA/B-like protein 62 (85 aa).

The protein belongs to the hssA/B family.

This is HssA/B-like protein 62 (hssl62) from Dictyostelium discoideum (Social amoeba).